We begin with the raw amino-acid sequence, 225 residues long: Probable septum site-determining protein MinC (225 aa).

The protein belongs to the MinC family. As to quaternary structure, interacts with MinD and FtsZ.

In terms of biological role, cell division inhibitor that blocks the formation of polar Z ring septums. Rapidly oscillates between the poles of the cell to destabilize FtsZ filaments that have formed before they mature into polar Z rings. Prevents FtsZ polymerization. In Listeria monocytogenes serotype 4a (strain HCC23), this protein is Probable septum site-determining protein MinC.